Consider the following 304-residue polypeptide: Recombination-associated protein RdgC (304 aa).

Belongs to the RdgC family.

The protein localises to the cytoplasm. The protein resides in the nucleoid. In terms of biological role, may be involved in recombination. This Paraburkholderia phymatum (strain DSM 17167 / CIP 108236 / LMG 21445 / STM815) (Burkholderia phymatum) protein is Recombination-associated protein RdgC.